The primary structure comprises 299 residues: tRNA dimethylallyltransferase (299 aa).

Glycine 13 to threonine 20 is an ATP binding site. Threonine 15–threonine 20 serves as a coordination point for substrate. The tract at residues aspartate 38–glutamine 41 is interaction with substrate tRNA.

This sequence belongs to the IPP transferase family. In terms of assembly, monomer. Mg(2+) serves as cofactor.

The catalysed reaction is adenosine(37) in tRNA + dimethylallyl diphosphate = N(6)-dimethylallyladenosine(37) in tRNA + diphosphate. In terms of biological role, catalyzes the transfer of a dimethylallyl group onto the adenine at position 37 in tRNAs that read codons beginning with uridine, leading to the formation of N6-(dimethylallyl)adenosine (i(6)A). In Prochlorococcus marinus (strain MIT 9515), this protein is tRNA dimethylallyltransferase.